Consider the following 416-residue polypeptide: Orexin/Hypocretin receptor type 1 (416 aa).

A disordered region spans residues 1–22 (MEPSATPGAQPGVPTSSGEPFH). The Extracellular portion of the chain corresponds to 1–46 (MEPSATPGAQPGVPTSSGEPFHLPPDYEDEFLRYLWRDYLYPKQYE). Residues 26–41 (DYEDEFLRYLWRDYLY) form a required for response to orexin-A region. A helical membrane pass occupies residues 47–67 (WVLIAAYVAVFLIALVGNTLV). Residues 68-82 (CLAVWRNHHMRTVTN) lie on the Cytoplasmic side of the membrane. Residues 83–105 (YFIVNLSLADVLVTAICLPASLL) form a helical membrane-spanning segment. At 106-119 (VDITESWLFGQALC) the chain is on the extracellular side. C119 and C202 form a disulfide bridge. A helical membrane pass occupies residues 120-140 (KVIPYLQAVSVSVAVLTLSFI). At 141 to 160 (ALDRWYAICHPLLFKSTARR) the chain is on the cytoplasmic side. A helical membrane pass occupies residues 161-182 (ARGSILGIWAVSLAVMVPQAAV). Topologically, residues 183-213 (MECSSVLPELANRTRLFSVCDEHWADELYPK) are extracellular. N194 is a glycosylation site (N-linked (GlcNAc...) asparagine). The helical transmembrane segment at 214–235 (IYHSCFFIVTYLAPLGLMAMAY) threads the bilayer. Over 236-298 (FQIFRKLWGR…QMRARRKTAK (63 aa)) the chain is Cytoplasmic. A helical membrane pass occupies residues 299–321 (MLMVVLLVFALCYLPISVLNVLK). Over 322 to 336 (RVFGMFRQASDREAV) the chain is Extracellular. A helical transmembrane segment spans residues 337 to 360 (YACFTFSHWLVYANSAANPIIYNF). Residues 361 to 416 (LSGKFREQFKAAFSCCLPGLGPGSSARHKSLSLQSRCSVSKVSEHVVLTTVTTVLS) lie on the Cytoplasmic side of the membrane.

It belongs to the G-protein coupled receptor 1 family. In terms of tissue distribution, widely expressed.

It is found in the cell membrane. Its function is as follows. Moderately selective excitatory receptor for orexin-A and, with a lower affinity, for orexin-B neuropeptide. Triggers an increase in cytoplasmic Ca(2+) levels in response to orexin-A binding. The protein is Orexin/Hypocretin receptor type 1 of Mus musculus (Mouse).